The following is a 113-amino-acid chain: Na(+)/H(+) antiporter subunit C1 (113 aa).

Helical transmembrane passes span 1-21 (MEII…YLVL), 28-48 (IVMG…TMGG), and 72-92 (LILT…VLAF).

It belongs to the CPA3 antiporters (TC 2.A.63) subunit C family. As to quaternary structure, may form a heterooligomeric complex that consists of seven subunits: mnhA1, mnhB1, mnhC1, mnhD1, mnhE1, mnhF1 and mnhG1.

It localises to the cell membrane. Functionally, mnh complex is a Na(+)/H(+) antiporter involved in Na(+) excretion. The protein is Na(+)/H(+) antiporter subunit C1 (mnhC1) of Staphylococcus haemolyticus (strain JCSC1435).